Reading from the N-terminus, the 129-residue chain is MAKVYATGKRKTAIAKVWLTSGSGKLNINGQSLNDWLGGHEAIKMKVMQPLILTKQEKSVDIHAVTLGGGYSAQAEALRHGISKALNAYDVAFRAMLKPKGLLTRDSRVVERKKYGKRKARRSPQFSKR.

The protein belongs to the universal ribosomal protein uS9 family.

The protein is Small ribosomal subunit protein uS9 of Helicobacter hepaticus (strain ATCC 51449 / 3B1).